The following is a 345-amino-acid chain: Selenide, water dikinase (345 aa).

The active site involves C15. Residues K18 and S46–D48 each bind ATP. D49 is a Mg(2+) binding site. ATP contacts are provided by residues D66, D89, and G137–S139. D89 contributes to the Mg(2+) binding site. A Mg(2+)-binding site is contributed by D225.

Belongs to the selenophosphate synthase 1 family. Class I subfamily. Homodimer. It depends on Mg(2+) as a cofactor.

It carries out the reaction hydrogenselenide + ATP + H2O = selenophosphate + AMP + phosphate + 2 H(+). Its function is as follows. Synthesizes selenophosphate from selenide and ATP. In Aeromonas salmonicida (strain A449), this protein is Selenide, water dikinase.